Reading from the N-terminus, the 95-residue chain is Aspartyl/glutamyl-tRNA(Asn/Gln) amidotransferase subunit C (95 aa).

Belongs to the GatC family. Heterotrimer of A, B and C subunits.

The catalysed reaction is L-glutamyl-tRNA(Gln) + L-glutamine + ATP + H2O = L-glutaminyl-tRNA(Gln) + L-glutamate + ADP + phosphate + H(+). It carries out the reaction L-aspartyl-tRNA(Asn) + L-glutamine + ATP + H2O = L-asparaginyl-tRNA(Asn) + L-glutamate + ADP + phosphate + 2 H(+). Allows the formation of correctly charged Asn-tRNA(Asn) or Gln-tRNA(Gln) through the transamidation of misacylated Asp-tRNA(Asn) or Glu-tRNA(Gln) in organisms which lack either or both of asparaginyl-tRNA or glutaminyl-tRNA synthetases. The reaction takes place in the presence of glutamine and ATP through an activated phospho-Asp-tRNA(Asn) or phospho-Glu-tRNA(Gln). The sequence is that of Aspartyl/glutamyl-tRNA(Asn/Gln) amidotransferase subunit C from Marinobacter nauticus (strain ATCC 700491 / DSM 11845 / VT8) (Marinobacter aquaeolei).